Here is a 271-residue protein sequence, read N- to C-terminus: N-acetyltransferase ECO1 (271 aa).

The segment at 1 to 38 (MKTYRAKRKYLSESEDDVFSSSPTQSPETSPLQPPNES) is disordered. Positions 20-31 (SSSPTQSPETSP) are enriched in low complexity. Residues 80–104 (TTCKTCGMTYQVAYGPDISAHKSFH) form a CCHH-type zinc finger.

The protein belongs to the acetyltransferase family. ECO subfamily.

It localises to the nucleus. Functionally, probable acetyltransferase required for the establishment of sister chromatid cohesion and couple the processes of cohesion and DNA replication to ensure that only sister chromatids become paired together. In contrast to the structural cohesins, the deposition and establishment factors are required only during S phase. Acts by acetylating the cohesin complex component SMC3. The chain is N-acetyltransferase ECO1 (ECO1) from Yarrowia lipolytica (strain CLIB 122 / E 150) (Yeast).